The chain runs to 206 residues: MTDTPTKQENQSKTENPPSSNANEQRRGNRNNDRKRNRRGDSKNERDSEWQERVVQIRRVSKTVKGGKKMSFRAIVVVGNEKGQVGVGVGKAGDVIGAVRKGVSDGKKHLVRVPLTPNNSIPTLSKGRDGAANVLIRPAAPGTGVIAGGSIRTVLELAGIKNVLAKRLGSKTPLNNARAAMVALSQLRTHKSASRERGISLEQLYS.

Polar residues predominate over residues 1 to 23 (MTDTPTKQENQSKTENPPSSNAN). Residues 1–52 (MTDTPTKQENQSKTENPPSSNANEQRRGNRNNDRKRNRRGDSKNERDSEWQE) are disordered. Over residues 24-52 (EQRRGNRNNDRKRNRRGDSKNERDSEWQE) the composition is skewed to basic and acidic residues. In terms of domain architecture, S5 DRBM spans 50–113 (WQERVVQIRR…SDGKKHLVRV (64 aa)).

The protein belongs to the universal ribosomal protein uS5 family. In terms of assembly, part of the 30S ribosomal subunit. Contacts proteins S4 and S8.

In terms of biological role, with S4 and S12 plays an important role in translational accuracy. Functionally, located at the back of the 30S subunit body where it stabilizes the conformation of the head with respect to the body. In Prochlorococcus marinus subsp. pastoris (strain CCMP1986 / NIES-2087 / MED4), this protein is Small ribosomal subunit protein uS5.